The primary structure comprises 465 residues: 3-isopropylmalate dehydratase large subunit (465 aa).

[4Fe-4S] cluster is bound by residues Cys347, Cys407, and Cys410.

It belongs to the aconitase/IPM isomerase family. LeuC type 1 subfamily. Heterodimer of LeuC and LeuD. Requires [4Fe-4S] cluster as cofactor.

It carries out the reaction (2R,3S)-3-isopropylmalate = (2S)-2-isopropylmalate. The protein operates within amino-acid biosynthesis; L-leucine biosynthesis; L-leucine from 3-methyl-2-oxobutanoate: step 2/4. Its function is as follows. Catalyzes the isomerization between 2-isopropylmalate and 3-isopropylmalate, via the formation of 2-isopropylmaleate. This Buchnera aphidicola subsp. Pemphigus spyrothecae protein is 3-isopropylmalate dehydratase large subunit.